Consider the following 2873-residue polypeptide: WD repeat-containing protein 87 (2873 aa).

WD repeat units follow at residues 108–146 (PCRFNISCLCYDPEMKMLLSGILGAVVTWVIELGGTGLQ), 199–239 (TSSG…PLHS), 242–283 (AHQS…RRLE), 368–407 (SILDQAVDWAYDPGKEELFVATGSSEVLVFDTTRCPCPAK), 415–460 (NSQD…RLEK), 516–553 (LSSCHLTHLILLPKSVGAITETNCLRLWKFHDFLSSGS), and 565–604 (LHLCAITSFDVCLSLSLFVTGSADGSVRIWDFHGRLIGIL). 5 disordered regions span residues 1049–1124 (FSLD…ESGT), 1177–1199 (DKRDKKATAQKLKKKHKKKGKEA), 1392–1413 (EKKTFQKSPKQGRKAVQKERKV), 1531–1607 (SKSK…QEER), and 2199–2338 (KRKE…EEVD). 2 stretches are compositionally biased toward basic residues: residues 1089-1101 (VKKHSQKWLRGLK) and 1187-1197 (KLKKKHKKKGK). A compositionally biased stretch (basic and acidic residues) spans 1549–1574 (EVSREGEEKEQQVTEEQRHIQEEHKW). Positions 1575 to 1586 (ARIHRKRARAEK) are enriched in basic residues. Composition is skewed to basic and acidic residues over residues 1587–1607 (KRAQEERKLAQEEEKLAQEER) and 2204–2213 (KRGDKPKEKF). The span at 2244 to 2276 (SSEEEEEREEEEEREEEEEREEEEERKEEEEGE) shows a compositional bias: acidic residues. Residues 2277–2287 (EKQVEKEEEEK) show a composition bias toward basic and acidic residues. Acidic residues predominate over residues 2304–2337 (EVFEEKEEIMSEEETESLSDEEEEEESCSLEEEV).

This Homo sapiens (Human) protein is WD repeat-containing protein 87 (WDR87).